Reading from the N-terminus, the 66-residue chain is M-poneratoxin-Dq3a (66 aa).

An N-terminal signal peptide occupies residues 1-23 (MKLSALSIIFGMILVMTIMYTKA). The propeptide occupies 24–43 (EAEAEAEADADADAKAEAEA).

Belongs to the non-disulfide-bridged peptide (NDBP) superfamily. Medium-length antimicrobial peptide (group 3) family. Ponericin-W subfamily. Expressed by the venom gland.

The protein localises to the secreted. Its subcellular location is the target cell membrane. In terms of biological role, may have antimicrobial properties by disrupting the integrity of the bacterial cell membrane. In addition, when tested in vitro on the parasite Trypanosoma cruzi (responsible of the Chagas disease), is able to potently reduce the number of the three forms (epimastigote, trypomastigote and amastigote) by inducing cell death through necrosis. Its function is as follows. May have antimicrobial properties by disrupting the integrity of the bacterial cell membrane. In addition, when tested in vitro on the parasite Trypanosoma cruzi (responsible of the Chagas disease), is able to moderately reduce the number of the forms epimastigote and trypomastigote. Its activity on the amastigote form has not been tested. Functionally, may have antimicrobial properties by disrupting the integrity of the bacterial cell membrane. In addition, when tested in vitro on the parasite Trypanosoma cruzi (responsible of the Chagas disease), shows only a weak reduction of the number of the trypomastigote forms. Has no activity on the epimastigote forms. Its activity on the amastigote form has not been tested. This chain is M-poneratoxin-Dq3a, found in Dinoponera quadriceps (South American ant).